The sequence spans 176 residues: Disulfide bond formation protein B (176 aa).

Over 1-14 (MLRFLNRCSRGRGA) the chain is Cytoplasmic. A helical membrane pass occupies residues 15-31 (WLLLAFTALALELTALY). At 32–49 (FQHVMLLKPCVLCIYQRS) the chain is on the periplasmic side. The cysteines at positions 41 and 44 are disulfide-linked. Residues 50–65 (ALWGVFAAGIVGAIAP) traverse the membrane as a helical segment. Residues 66-71 (SSLLRY) are Cytoplasmic-facing. A helical transmembrane segment spans residues 72–89 (PAIALWIYSSYEGIRLAW). Over 90–144 (KHTDILLNPSPFTTCDFFVSFPSWLPLDKWLPAIFNATGDCSERQWSFLSMEMPQ) the chain is Periplasmic. Cys-104 and Cys-130 are joined by a disulfide. A helical transmembrane segment spans residues 145-163 (WLLGIFAAYLLIAVLVLIA). The Cytoplasmic portion of the chain corresponds to 164–176 (QPFRSKRRDLFSR).

This sequence belongs to the DsbB family.

It is found in the cell inner membrane. Its function is as follows. Required for disulfide bond formation in some periplasmic proteins. Acts by oxidizing the DsbA protein. The protein is Disulfide bond formation protein B of Pectobacterium atrosepticum (strain SCRI 1043 / ATCC BAA-672) (Erwinia carotovora subsp. atroseptica).